The following is a 119-amino-acid chain: uncharacterized protein (119 aa).

2 helical membrane-spanning segments follow: residues 7-27 (ILHN…LLLV) and 32-52 (YFFE…FLML).

The protein resides in the membrane. This is an uncharacterized protein from Saccharomyces cerevisiae (strain ATCC 204508 / S288c) (Baker's yeast).